A 255-amino-acid chain; its full sequence is Placenta-expressed transcript 1 protein (255 aa).

The first 26 residues, Met1–Ser26, serve as a signal peptide directing secretion. N-linked (GlcNAc...) asparagine glycosylation is found at Asn57, Asn67, and Asn126. Residue Ser236 is the site of GPI-anchor amidated serine attachment. Positions Pro237–Phe255 are cleaved as a propeptide — removed in mature form.

In terms of processing, N-glycosylated. GPI-anchored.

The protein resides in the apical cell membrane. Modulates leading keratinocyte migration and cellular adhesion to matrix proteins during a wound-healing response and promotes wound repair. May play a role during trichilemmal differentiation of the hair follicle. The chain is Placenta-expressed transcript 1 protein (Plet1) from Rattus norvegicus (Rat).